The following is a 97-amino-acid chain: MKLRPLHDRVVIRRSEEESKTAGGIVLPGSAAEKPNRGEVVAVGTGRILDNGEVRALAVKVGDKVVFGPYSGSNTVKVDGEDLLVMSENEILAVVEG.

Belongs to the GroES chaperonin family. In terms of assembly, heptamer of 7 subunits arranged in a ring. Interacts with the chaperonin GroEL.

The protein localises to the cytoplasm. Its function is as follows. Together with the chaperonin GroEL, plays an essential role in assisting protein folding. The GroEL-GroES system forms a nano-cage that allows encapsulation of the non-native substrate proteins and provides a physical environment optimized to promote and accelerate protein folding. GroES binds to the apical surface of the GroEL ring, thereby capping the opening of the GroEL channel. The protein is Co-chaperonin GroES of Pseudomonas putida (strain W619).